Here is a 359-residue protein sequence, read N- to C-terminus: UDP-N-acetylglucosamine--N-acetylmuramyl-(pentapeptide) pyrophosphoryl-undecaprenol N-acetylglucosamine transferase (359 aa).

UDP-N-acetyl-alpha-D-glucosamine contacts are provided by residues 15–17 (SGG), asparagine 127, arginine 164, serine 192, isoleucine 246, 265–270 (ALTVSE), and glutamine 290.

Belongs to the glycosyltransferase 28 family. MurG subfamily.

It is found in the cell membrane. It catalyses the reaction di-trans,octa-cis-undecaprenyl diphospho-N-acetyl-alpha-D-muramoyl-L-alanyl-D-glutamyl-meso-2,6-diaminopimeloyl-D-alanyl-D-alanine + UDP-N-acetyl-alpha-D-glucosamine = di-trans,octa-cis-undecaprenyl diphospho-[N-acetyl-alpha-D-glucosaminyl-(1-&gt;4)]-N-acetyl-alpha-D-muramoyl-L-alanyl-D-glutamyl-meso-2,6-diaminopimeloyl-D-alanyl-D-alanine + UDP + H(+). It functions in the pathway cell wall biogenesis; peptidoglycan biosynthesis. Cell wall formation. Catalyzes the transfer of a GlcNAc subunit on undecaprenyl-pyrophosphoryl-MurNAc-pentapeptide (lipid intermediate I) to form undecaprenyl-pyrophosphoryl-MurNAc-(pentapeptide)GlcNAc (lipid intermediate II). In Wigglesworthia glossinidia brevipalpis, this protein is UDP-N-acetylglucosamine--N-acetylmuramyl-(pentapeptide) pyrophosphoryl-undecaprenol N-acetylglucosamine transferase.